We begin with the raw amino-acid sequence, 503 residues long: Probable cytosol aminopeptidase (503 aa).

Residues K270 and D275 each contribute to the Mn(2+) site. K282 is a catalytic residue. Residues D293, D352, and E354 each contribute to the Mn(2+) site. Residue R356 is part of the active site.

It belongs to the peptidase M17 family. Mn(2+) serves as cofactor.

It localises to the cytoplasm. It catalyses the reaction Release of an N-terminal amino acid, Xaa-|-Yaa-, in which Xaa is preferably Leu, but may be other amino acids including Pro although not Arg or Lys, and Yaa may be Pro. Amino acid amides and methyl esters are also readily hydrolyzed, but rates on arylamides are exceedingly low.. It carries out the reaction Release of an N-terminal amino acid, preferentially leucine, but not glutamic or aspartic acids.. Functionally, presumably involved in the processing and regular turnover of intracellular proteins. Catalyzes the removal of unsubstituted N-terminal amino acids from various peptides. This is Probable cytosol aminopeptidase from Klebsiella pneumoniae subsp. pneumoniae (strain ATCC 700721 / MGH 78578).